A 550-amino-acid polypeptide reads, in one-letter code: Hydroxylamine reductase (550 aa).

Cysteine 3, cysteine 6, cysteine 18, and cysteine 25 together coordinate [2Fe-2S] cluster. Hybrid [4Fe-2O-2S] cluster is bound by residues histidine 249, glutamate 273, cysteine 317, cysteine 405, cysteine 433, cysteine 458, glutamate 492, and lysine 494. Cysteine 405 carries the cysteine persulfide modification.

It belongs to the HCP family. It depends on [2Fe-2S] cluster as a cofactor. The cofactor is hybrid [4Fe-2O-2S] cluster.

It is found in the cytoplasm. The enzyme catalyses A + NH4(+) + H2O = hydroxylamine + AH2 + H(+). In terms of biological role, catalyzes the reduction of hydroxylamine to form NH(3) and H(2)O. The chain is Hydroxylamine reductase from Escherichia coli (strain SE11).